A 192-amino-acid chain; its full sequence is dTTP/UTP pyrophosphatase (192 aa).

Asp70 serves as the catalytic Proton acceptor.

It belongs to the Maf family. YhdE subfamily. A divalent metal cation serves as cofactor.

It is found in the cytoplasm. The catalysed reaction is dTTP + H2O = dTMP + diphosphate + H(+). It carries out the reaction UTP + H2O = UMP + diphosphate + H(+). In terms of biological role, nucleoside triphosphate pyrophosphatase that hydrolyzes dTTP and UTP. May have a dual role in cell division arrest and in preventing the incorporation of modified nucleotides into cellular nucleic acids. This Clostridium perfringens (strain SM101 / Type A) protein is dTTP/UTP pyrophosphatase.